We begin with the raw amino-acid sequence, 94 residues long: DNA-directed RNA polymerase subunit Rpo11 (94 aa).

Belongs to the archaeal Rpo11/eukaryotic RPB11/RPC19 RNA polymerase subunit family. Part of the RNA polymerase complex.

It localises to the cytoplasm. The enzyme catalyses RNA(n) + a ribonucleoside 5'-triphosphate = RNA(n+1) + diphosphate. DNA-dependent RNA polymerase (RNAP) catalyzes the transcription of DNA into RNA using the four ribonucleoside triphosphates as substrates. This is DNA-directed RNA polymerase subunit Rpo11 from Haloarcula marismortui (strain ATCC 43049 / DSM 3752 / JCM 8966 / VKM B-1809) (Halobacterium marismortui).